The primary structure comprises 600 residues: Proline--tRNA ligase (600 aa).

The protein belongs to the class-II aminoacyl-tRNA synthetase family. ProS type 1 subfamily. As to quaternary structure, homodimer.

It localises to the cytoplasm. It carries out the reaction tRNA(Pro) + L-proline + ATP = L-prolyl-tRNA(Pro) + AMP + diphosphate. Functionally, catalyzes the attachment of proline to tRNA(Pro) in a two-step reaction: proline is first activated by ATP to form Pro-AMP and then transferred to the acceptor end of tRNA(Pro). As ProRS can inadvertently accommodate and process non-cognate amino acids such as alanine and cysteine, to avoid such errors it has two additional distinct editing activities against alanine. One activity is designated as 'pretransfer' editing and involves the tRNA(Pro)-independent hydrolysis of activated Ala-AMP. The other activity is designated 'posttransfer' editing and involves deacylation of mischarged Ala-tRNA(Pro). The misacylated Cys-tRNA(Pro) is not edited by ProRS. The polypeptide is Proline--tRNA ligase (Prochlorococcus marinus (strain MIT 9515)).